The chain runs to 707 residues: Ribosomal RNA large subunit methyltransferase K/L (707 aa).

The THUMP domain occupies 44-155; the sequence is VIYNLCLWSR…NDILTVSFDL (112 aa).

The protein belongs to the methyltransferase superfamily. RlmKL family.

The protein localises to the cytoplasm. The enzyme catalyses guanosine(2445) in 23S rRNA + S-adenosyl-L-methionine = N(2)-methylguanosine(2445) in 23S rRNA + S-adenosyl-L-homocysteine + H(+). The catalysed reaction is guanosine(2069) in 23S rRNA + S-adenosyl-L-methionine = N(2)-methylguanosine(2069) in 23S rRNA + S-adenosyl-L-homocysteine + H(+). In terms of biological role, specifically methylates the guanine in position 2445 (m2G2445) and the guanine in position 2069 (m7G2069) of 23S rRNA. The protein is Ribosomal RNA large subunit methyltransferase K/L of Legionella pneumophila subsp. pneumophila (strain Philadelphia 1 / ATCC 33152 / DSM 7513).